The sequence spans 163 residues: Staphylokinase (163 aa).

A signal peptide spans 1–27; that stretch reads MLKRSLLFLTVLLLLFSFSSITNEVSA.

This sequence belongs to the staphylokinase family.

The protein localises to the secreted. In terms of biological role, potent plasminogen activator that converts plasminogen into plasmin. It forms a 1:1 complex with plasmin, which in turn activates other plasminogen molecules. The protein is Staphylokinase (sak) of Staphylococcus aureus (Bacteriophage P42D).